We begin with the raw amino-acid sequence, 642 residues long: Chaperone protein HtpG (642 aa).

The tract at residues 1–350 (MATDTQKETL…SNDLSLNVSR (350 aa)) is a; substrate-binding. A b region spans residues 351-567 (EILQNDHAVD…EYDMGLQMRR (217 aa)). The interval 568-642 (LLEQAGQKLP…MNKLIVQLSK (75 aa)) is c.

This sequence belongs to the heat shock protein 90 family. Homodimer.

Its subcellular location is the cytoplasm. Functionally, molecular chaperone. Has ATPase activity. The polypeptide is Chaperone protein HtpG (Marinomonas sp. (strain MWYL1)).